The primary structure comprises 571 residues: Proline--tRNA ligase (571 aa).

This sequence belongs to the class-II aminoacyl-tRNA synthetase family. ProS type 1 subfamily. In terms of assembly, homodimer.

The protein resides in the cytoplasm. It carries out the reaction tRNA(Pro) + L-proline + ATP = L-prolyl-tRNA(Pro) + AMP + diphosphate. Its function is as follows. Catalyzes the attachment of proline to tRNA(Pro) in a two-step reaction: proline is first activated by ATP to form Pro-AMP and then transferred to the acceptor end of tRNA(Pro). As ProRS can inadvertently accommodate and process non-cognate amino acids such as alanine and cysteine, to avoid such errors it has two additional distinct editing activities against alanine. One activity is designated as 'pretransfer' editing and involves the tRNA(Pro)-independent hydrolysis of activated Ala-AMP. The other activity is designated 'posttransfer' editing and involves deacylation of mischarged Ala-tRNA(Pro). The misacylated Cys-tRNA(Pro) is not edited by ProRS. The sequence is that of Proline--tRNA ligase from Acinetobacter baumannii (strain ATCC 17978 / DSM 105126 / CIP 53.77 / LMG 1025 / NCDC KC755 / 5377).